The sequence spans 244 residues: ATP synthase subunit b 2 (244 aa).

The helical transmembrane segment at 2-22 threads the bilayer; sequence LIDWFTIVAQIINFLILVFLL.

This sequence belongs to the ATPase B chain family. As to quaternary structure, F-type ATPases have 2 components, F(1) - the catalytic core - and F(0) - the membrane proton channel. F(1) has five subunits: alpha(3), beta(3), gamma(1), delta(1), epsilon(1). F(0) has four main subunits: a(1), b(1), b'(1) and c(10-14). The alpha and beta chains form an alternating ring which encloses part of the gamma chain. F(1) is attached to F(0) by a central stalk formed by the gamma and epsilon chains, while a peripheral stalk is formed by the delta, b and b' chains.

The protein resides in the cellular thylakoid membrane. Its function is as follows. F(1)F(0) ATP synthase produces ATP from ADP in the presence of a proton or sodium gradient. F-type ATPases consist of two structural domains, F(1) containing the extramembraneous catalytic core and F(0) containing the membrane proton channel, linked together by a central stalk and a peripheral stalk. During catalysis, ATP synthesis in the catalytic domain of F(1) is coupled via a rotary mechanism of the central stalk subunits to proton translocation. In terms of biological role, component of the F(0) channel, it forms part of the peripheral stalk, linking F(1) to F(0). The sequence is that of ATP synthase subunit b 2 from Crocosphaera subtropica (strain ATCC 51142 / BH68) (Cyanothece sp. (strain ATCC 51142)).